Consider the following 85-residue polypeptide: Small ribosomal subunit protein bS16 (85 aa).

Belongs to the bacterial ribosomal protein bS16 family.

This Rubrobacter xylanophilus (strain DSM 9941 / JCM 11954 / NBRC 16129 / PRD-1) protein is Small ribosomal subunit protein bS16.